We begin with the raw amino-acid sequence, 104 residues long: MPSFDPRDLADLVRRPIVTEKATILMEQNKYTFEVIPKASKPEIKAAIEDLFQVKVVKVNTNLPPRKKRRVGKFIGYKPQYKRAIVTVAPGDEDKIRQVLFPEV.

It belongs to the universal ribosomal protein uL23 family. Part of the 50S ribosomal subunit. Contacts protein L29, and trigger factor when it is bound to the ribosome.

One of the early assembly proteins it binds 23S rRNA. One of the proteins that surrounds the polypeptide exit tunnel on the outside of the ribosome. Forms the main docking site for trigger factor binding to the ribosome. This chain is Large ribosomal subunit protein uL23, found in Nostoc punctiforme (strain ATCC 29133 / PCC 73102).